A 260-amino-acid polypeptide reads, in one-letter code: MVNFCGKEFSSRLLIGSALYESPAIMQDAIRAAGAEIVTVSLRRETAGGKAGDVFWSLIRELGVTVLPNTAGCRTVREAVTTARLARELFGTSWIKLEVIGDNDTLQPDVVGLVEAATELVNDGFEVFPYCTEDLSVAMRLVDAGCKVVMPWAAPIGSARGITNRDALRLLRDRLPDITLVVDAGLGAPSHAAAALELGFDAVLLNTAIAKAADSVAMAGAFKLAVEAGRIAYESGLMDARDFASPSTPVIGTPFWHAVS.

The Schiff-base intermediate with DXP role is filled by K96. 1-deoxy-D-xylulose 5-phosphate is bound by residues G157, 184–185, and 206–207; these read AG and NT.

It belongs to the ThiG family. In terms of assembly, homotetramer. Forms heterodimers with either ThiH or ThiS.

The protein localises to the cytoplasm. The catalysed reaction is [ThiS sulfur-carrier protein]-C-terminal-Gly-aminoethanethioate + 2-iminoacetate + 1-deoxy-D-xylulose 5-phosphate = [ThiS sulfur-carrier protein]-C-terminal Gly-Gly + 2-[(2R,5Z)-2-carboxy-4-methylthiazol-5(2H)-ylidene]ethyl phosphate + 2 H2O + H(+). Its pathway is cofactor biosynthesis; thiamine diphosphate biosynthesis. Functionally, catalyzes the rearrangement of 1-deoxy-D-xylulose 5-phosphate (DXP) to produce the thiazole phosphate moiety of thiamine. Sulfur is provided by the thiocarboxylate moiety of the carrier protein ThiS. In vitro, sulfur can be provided by H(2)S. In Rhodopseudomonas palustris (strain BisB18), this protein is Thiazole synthase.